The primary structure comprises 360 residues: UPF0496 protein At3g19250 (360 aa).

The segment at 1-29 (MPHCFTFKPASPEGSLGDDHLPHPSPEGS) is disordered. 2 consecutive transmembrane segments (helical) span residues 205 to 225 (HHAT…VAAS) and 229 to 249 (IAYH…TPYL).

This sequence belongs to the UPF0496 family.

The protein localises to the membrane. The protein is UPF0496 protein At3g19250 of Arabidopsis thaliana (Mouse-ear cress).